The sequence spans 284 residues: Probable palmitoyltransferase ZDHHC24 (284 aa).

Over 1-18 (MGESWAARGAEGAPARMP) the chain is Cytoplasmic. Residues 19 to 39 (LVLTALWAAVVVLELAYVMVL) form a helical membrane-spanning segment. At 40–52 (GPGPPPLGPLARA) the chain is on the extracellular side. Residues 53–73 (LQLALAAYQLLNLLGNVVLFL) traverse the membrane as a helical segment. The Cytoplasmic segment spans residues 74–137 (RSDPSIRGVM…GCCVGFHNYR (64 aa)). The region spanning 94–144 (AYCYQCQSQVPPRSGHCSACRVCILRRDHHCRLLGCCVGFHNYRPFLCLLL) is the DHHC domain. C124 (S-palmitoyl cysteine intermediate) is an active-site residue. The chain crosses the membrane as a helical span at residues 138–158 (PFLCLLLHSAGVLLHISVLLG). Residues 159–166 (PALSALLQ) are Extracellular-facing. The chain crosses the membrane as a helical span at residues 167–187 (AHSALYTVALLLLPWLMLLTG). Over 188–195 (KVSLAQFA) the chain is Cytoplasmic. A helical transmembrane segment spans residues 196 to 216 (LAFVVDTCVAGALLCGAGLLF). At 217-284 (HGMLLLRGQT…TPGDVGLVTS (68 aa)) the chain is on the extracellular side.

It belongs to the DHHC palmitoyltransferase family.

The protein localises to the membrane. The enzyme catalyses L-cysteinyl-[protein] + hexadecanoyl-CoA = S-hexadecanoyl-L-cysteinyl-[protein] + CoA. In terms of biological role, probable palmitoyltransferase that could catalyze the addition of palmitate onto various protein substrates. The chain is Probable palmitoyltransferase ZDHHC24 from Mus musculus (Mouse).